The sequence spans 256 residues: Probable aquaporin TIP5-1 (256 aa).

N-acetylmethionine is present on M1. 5 helical membrane-spanning segments follow: residues 24–44, 57–77, 89–109, 144–164, and 171–191; these read CYVS…GSVM, PFGV…SVYI, AVTF…MFYW, FGAS…VFTA, and LPLA…VLAA. The short motif at 87–89 is the NPA 1 element; sequence NPA. The short motif at 200–202 is the NPA 2 element; it reads NPA. A helical transmembrane segment spans residues 222-242; sequence VGPLLGGATAALVYDNVVVPV. S249 is modified (phosphoserine).

This sequence belongs to the MIP/aquaporin (TC 1.A.8) family. TIP (TC 1.A.8.10) subfamily.

It is found in the membrane. In terms of biological role, potential aquaporin, which may facilitate the transport of water and small neutral solutes across cell membranes. The protein is Probable aquaporin TIP5-1 (TIP5-1) of Arabidopsis thaliana (Mouse-ear cress).